The following is a 274-amino-acid chain: MPSASSPRARLAALAVAALAAAPLAASAQPKAARGRTEVTWYGHAAFVVTTPGGTVLAIDPWLSNPKAPEPGLAGKLPKVDYILVSHGHFDHVGDAVALAKRTGAKLITNFDLGSSLVAAGYPKDQAGMDTLGNIGGTIQAGDAAVTMVTAVHSSGYADDKGTAHPGGNPMGFVIQVKGGPTLYHTGDTDLTQDMKQLPERFGRVDVMLTCIGGHFTMDPKAAAIAVGYVRPRTVVPMHFGTFPAIAGTPEELRAALKGKAEVRVLEPGKPVGF.

This sequence belongs to the UPF0173 family.

The sequence is that of UPF0173 metal-dependent hydrolase A2cp1_1196 from Anaeromyxobacter dehalogenans (strain 2CP-1 / ATCC BAA-258).